Consider the following 227-residue polypeptide: Cytidylate kinase (227 aa).

Position 12-20 (12-20 (GPSGAGKGT)) interacts with ATP.

The protein belongs to the cytidylate kinase family. Type 1 subfamily.

It is found in the cytoplasm. The enzyme catalyses CMP + ATP = CDP + ADP. The catalysed reaction is dCMP + ATP = dCDP + ADP. The polypeptide is Cytidylate kinase (Citrobacter koseri (strain ATCC BAA-895 / CDC 4225-83 / SGSC4696)).